A 377-amino-acid polypeptide reads, in one-letter code: Alanine racemase (377 aa).

The active-site Proton acceptor; specific for D-alanine is the Lys-35. An N6-(pyridoxal phosphate)lysine modification is found at Lys-35. Arg-130 provides a ligand contact to substrate. Residue Tyr-260 is the Proton acceptor; specific for L-alanine of the active site. Met-312 serves as a coordination point for substrate.

It belongs to the alanine racemase family. Pyridoxal 5'-phosphate is required as a cofactor.

The catalysed reaction is L-alanine = D-alanine. It participates in amino-acid biosynthesis; D-alanine biosynthesis; D-alanine from L-alanine: step 1/1. Functionally, catalyzes the interconversion of L-alanine and D-alanine. May also act on other amino acids. The protein is Alanine racemase (alr) of Leptothrix cholodnii (strain ATCC 51168 / LMG 8142 / SP-6) (Leptothrix discophora (strain SP-6)).